The chain runs to 206 residues: Imidazoleglycerol-phosphate dehydratase (206 aa).

The protein belongs to the imidazoleglycerol-phosphate dehydratase family.

Its subcellular location is the cytoplasm. The enzyme catalyses D-erythro-1-(imidazol-4-yl)glycerol 3-phosphate = 3-(imidazol-4-yl)-2-oxopropyl phosphate + H2O. The protein operates within amino-acid biosynthesis; L-histidine biosynthesis; L-histidine from 5-phospho-alpha-D-ribose 1-diphosphate: step 6/9. The polypeptide is Imidazoleglycerol-phosphate dehydratase (Mycolicibacterium smegmatis (strain ATCC 700084 / mc(2)155) (Mycobacterium smegmatis)).